The chain runs to 242 residues: Segregation and condensation protein A (242 aa).

Belongs to the ScpA family. As to quaternary structure, component of a cohesin-like complex composed of ScpA, ScpB and the Smc homodimer, in which ScpA and ScpB bind to the head domain of Smc. The presence of the three proteins is required for the association of the complex with DNA.

It is found in the cytoplasm. In terms of biological role, participates in chromosomal partition during cell division. May act via the formation of a condensin-like complex containing Smc and ScpB that pull DNA away from mid-cell into both cell halves. The protein is Segregation and condensation protein A of Streptococcus pneumoniae serotype 19F (strain G54).